The following is a 62-amino-acid chain: Ranacyclin-T (62 aa).

The first 22 residues, 1 to 22, serve as a signal peptide directing secretion; it reads MFTMKKTLLVLFFLGVVSLSLC. A propeptide spanning residues 23 to 43 is cleaved from the precursor; the sequence is VEERDADEEDGGEVMEEEVKR. A disulfide bridge links Cys-49 with Cys-59. The residue at position 60 (Lys-60) is a Lysine amide.

Belongs to the frog skin active peptide (FSAP) family. Brevinin subfamily. As to expression, expressed by the skin granular glands.

Its subcellular location is the secreted. Has antibacterial activity against Gram-positive bacteria B.megaterium Bm11, S.lentus and M.luteus, and Gram-negative bacteria E.coli D22, Y.pseudotuberculosis YP III and P.syringae pv tabaci, and antifungal activity against C.albicans ATCC 10231, C.tropicalis, C.guiller-mondii and P.nicotianae spores. Has weak hemolytic activity. The mature peptide inserts into the hydrophobic core of the bacterial cell membrane and increases permeability without disrupting membrane integrity. Probably binds to the outer membrane surface before aggregating to form transmembrane pores. This chain is Ranacyclin-T (RNCT), found in Rana temporaria (European common frog).